A 143-amino-acid chain; its full sequence is Nucleoside diphosphate kinase (143 aa).

ATP-binding residues include Lys11, Phe59, Arg87, Thr93, Arg104, and Asn114. Catalysis depends on His117, which acts as the Pros-phosphohistidine intermediate.

Belongs to the NDK family. As to quaternary structure, homotetramer. Mg(2+) serves as cofactor.

It localises to the cytoplasm. The enzyme catalyses a 2'-deoxyribonucleoside 5'-diphosphate + ATP = a 2'-deoxyribonucleoside 5'-triphosphate + ADP. It catalyses the reaction a ribonucleoside 5'-diphosphate + ATP = a ribonucleoside 5'-triphosphate + ADP. Major role in the synthesis of nucleoside triphosphates other than ATP. The ATP gamma phosphate is transferred to the NDP beta phosphate via a ping-pong mechanism, using a phosphorylated active-site intermediate. The chain is Nucleoside diphosphate kinase from Enterobacter sp. (strain 638).